A 384-amino-acid polypeptide reads, in one-letter code: Glucans biosynthesis protein C (384 aa).

Transmembrane regions (helical) follow at residues 17–37, 54–74, 91–111, 140–160, 173–193, 212–232, 240–260, 274–294, 311–331, and 338–358; these read AWLMLLGIPFHISLIYSTHSW, FIHAFRMQVFFVISGYFSYML, VGIPMLTAIPLLTLPQFILLQ, LWFLLVLVILTTVSIGIFTWF, AISLAKLSLIFFLLGVAYAAI, FIVMQTLFYVPFFILGALAFI, FTTPSRGCTLGAAVAFIAYLL, TESVITMVMGLWMVNVVFSLG, ASLFIYLVHHPLTLFFGAYIT, and LIGFLCGLIFVMGIALILYEI.

Belongs to the acyltransferase 3 family. OpgC subfamily.

It localises to the cell membrane. The protein operates within glycan metabolism; osmoregulated periplasmic glucan (OPG) biosynthesis. Necessary for the succinyl substitution of periplasmic glucans. Could catalyze the transfer of succinyl residues from the cytoplasmic side of the membrane to the nascent glucan backbones on the periplasmic side of the membrane. The chain is Glucans biosynthesis protein C from Salmonella typhimurium (strain LT2 / SGSC1412 / ATCC 700720).